Reading from the N-terminus, the 420-residue chain is Nucleoporin NUP42 (420 aa).

The C3H1-type zinc-finger motif lies at 1–25 (MTICQFFLQGRCRFGDRCWNEHPGA). Residues 14-15 (FG) form an FG 1 repeat. Positions 25-111 (ARGAGGARQP…FASPLSDEQK (87 aa)) are disordered. Positions 42–67 (SGNNRRGWNASSQRYSNVIQPSSFPK) are enriched in polar residues. 10 FG repeats span residues 82–83 (FG), 95–96 (FG), 218–219 (FG), 220–221 (FG), 228–229 (FG), 265–266 (FG), 271–272 (FG), 288–289 (FG), 345–346 (FG), and 364–365 (FG). Polar residues predominate over residues 87–102 (SGASTSRGFGSSQNPF). Residues 323 to 345 (MAASPSGSTTAPPLRSGSSVVGF) form a disordered region. The interaction with GLE1 stretch occupies residues 365-420 (GGSGISTSVLASGAADNALFTPRDQLMKEELEQFQSQRFTLGKIPLKPPPVELLTV).

Probable component of the nuclear pore complex (NPC). Interacts with nuclear export protein NXF1. Interacts with GLE1. Able to form a heterotrimer with NUP155 and GLE1 in vitro. Interacts with XPO1. O-glycosylated.

It is found in the nucleus. Its subcellular location is the nuclear pore complex. The protein resides in the nucleus membrane. Its function is as follows. Required for the export of mRNAs containing poly(A) tails from the nucleus into the cytoplasm. This chain is Nucleoporin NUP42 (Nup42), found in Mus musculus (Mouse).